The chain runs to 207 residues: Ribosomal RNA small subunit methyltransferase G (207 aa).

S-adenosyl-L-methionine contacts are provided by residues Gly76, Gln81, 127–128 (VE), and Arg141.

This sequence belongs to the methyltransferase superfamily. RNA methyltransferase RsmG family.

It is found in the cytoplasm. It catalyses the reaction guanosine(527) in 16S rRNA + S-adenosyl-L-methionine = N(7)-methylguanosine(527) in 16S rRNA + S-adenosyl-L-homocysteine. Functionally, specifically methylates the N7 position of guanine in position 527 of 16S rRNA. The chain is Ribosomal RNA small subunit methyltransferase G from Neisseria meningitidis serogroup A / serotype 4A (strain DSM 15465 / Z2491).